The following is a 420-amino-acid chain: Phosphoribosylamine--glycine ligase (420 aa).

The region spanning 108 to 314 is the ATP-grasp domain; the sequence is KQFMEKYAIP…FAALIDALLH (207 aa). 134–195 lines the ATP pocket; sequence LNERGVPIVI…EDFLAGEEFS (62 aa). Positions 284 and 286 each coordinate Mg(2+).

The protein belongs to the GARS family. Mg(2+) serves as cofactor. Requires Mn(2+) as cofactor.

It catalyses the reaction 5-phospho-beta-D-ribosylamine + glycine + ATP = N(1)-(5-phospho-beta-D-ribosyl)glycinamide + ADP + phosphate + H(+). It participates in purine metabolism; IMP biosynthesis via de novo pathway; N(1)-(5-phospho-D-ribosyl)glycinamide from 5-phospho-alpha-D-ribose 1-diphosphate: step 2/2. The protein is Phosphoribosylamine--glycine ligase of Listeria monocytogenes serovar 1/2a (strain ATCC BAA-679 / EGD-e).